A 166-amino-acid chain; its full sequence is Endoribonuclease YbeY (166 aa).

Zn(2+) is bound by residues H132, H136, and H142.

This sequence belongs to the endoribonuclease YbeY family. Zn(2+) serves as cofactor.

The protein localises to the cytoplasm. In terms of biological role, single strand-specific metallo-endoribonuclease involved in late-stage 70S ribosome quality control and in maturation of the 3' terminus of the 16S rRNA. This is Endoribonuclease YbeY from Clostridium botulinum (strain Loch Maree / Type A3).